The following is a 323-amino-acid chain: UPF0065 protein BP0148 (323 aa).

The N-terminal stretch at 1–24 is a signal peptide; the sequence is MKPFSLLRRIATIALLMAASSAHA.

Belongs to the UPF0065 (bug) family.

The protein resides in the periplasm. This chain is UPF0065 protein BP0148, found in Bordetella pertussis (strain Tohama I / ATCC BAA-589 / NCTC 13251).